The sequence spans 1585 residues: Histone acetyltransferase lsy-12 (1585 aa).

2 disordered regions span residues 1–37 (MGKKRKPSPERSSDEDEVSTPSPKDRTARPTAAARRE) and 279–491 (GPQH…DDPV). Positions 23–37 (PKDRTARPTAAARRE) are enriched in basic and acidic residues. The span at 279-296 (GPQHENVTVSENVLSTES) shows a compositional bias: polar residues. Over residues 302 to 312 (TETKRLHDSSR) the composition is skewed to basic and acidic residues. Polar residues-rich tracts occupy residues 355-364 (LLSNPHSTPV) and 411-426 (SRLSALTIDTNRSNDL). Residues 431–440 (SAPSSSSAAS) are compositionally biased toward low complexity. Positions 453 to 469 (QQRRKGNQSAARSRKIK) are enriched in basic residues. Positions 477 to 491 (QEDEPMELDSDDDPV) are enriched in acidic residues. In terms of domain architecture, MYST-type HAT spans 544–830 (EQARLPERIH…YDPECLDWVP (287 aa)). Residues 577-602 (LFICEFCFFYARSDEIMQNHAKKCML) form a C2HC MYST-type zinc finger. An N6-acetyllysine; by autocatalysis modification is found at lysine 644. 685 to 689 (SCIMT) serves as a coordination point for acetyl-CoA. The active-site Proton donor/acceptor is glutamate 720. Residues serine 724 and lysine 815 each contribute to the acetyl-CoA site. 2 stretches are compositionally biased toward basic and acidic residues: residues 844–855 (SKEEIEQDEQRR) and 947–956 (VLDKSNIREE). Disordered regions lie at residues 844 to 903 (SKEE…LKHE), 927 to 1262 (EENK…IGKS), 1286 to 1373 (ESTA…ASNH), and 1431 to 1507 (HHQF…VHPQ). Residues 977–999 (NKCNNTESEPNPSGRKTSATSSG) show a composition bias toward polar residues. The segment covering 1011 to 1022 (TEEEEEDDDPTD) has biased composition (acidic residues). The span at 1029 to 1046 (DDEKPFETSVNKEKNEKS) shows a compositional bias: basic and acidic residues. Basic residues predominate over residues 1047-1060 (RRGKKVSKKRRSVA). Basic and acidic residues-rich tracts occupy residues 1070–1081 (VRDRDEPKKAEN) and 1135–1151 (DIPKSDEDHQSTEAYDR). Residues 1164 to 1173 (PTPDSYHSSP) show a composition bias toward low complexity. Polar residues predominate over residues 1185–1194 (LMQAQQNIYQ). Residues 1196–1207 (NDCHFAENDSKP) are compositionally biased toward basic and acidic residues. Polar residues-rich tracts occupy residues 1298–1317 (AGPSTSSHVTPQMSMINTTP) and 1324–1333 (HPNSQQQATP). The span at 1482-1493 (QHQQQQPQQPQQ) shows a compositional bias: low complexity.

The protein belongs to the MYST (SAS/MOZ) family.

It catalyses the reaction L-lysyl-[protein] + acetyl-CoA = N(6)-acetyl-L-lysyl-[protein] + CoA + H(+). Functionally, probable histone acetyltransferase. Required to initiate and then maintain lateralized gene expression in the ASE sensory neurons. Involved in determining cell fate in the ASE neurons. This Caenorhabditis elegans protein is Histone acetyltransferase lsy-12.